The sequence spans 1071 residues: SLIT-ROBO Rho GTPase-activating protein 2 (1071 aa).

In terms of domain architecture, F-BAR spans 22 to 325 (KEIRAQLTEQ…AVENLDATSD (304 aa)). Positions 181 to 203 (LKEAEKQEEKQIGKSVKQEDRQT) are enriched in basic and acidic residues. The disordered stretch occupies residues 181 to 211 (LKEAEKQEEKQIGKSVKQEDRQTPRSPDSTA). The residue at position 206 (serine 206) is a Phosphoserine. Residues 362–401 (VQSELVQRCQQLQSRLSTLKIENEEVKKTMEATLQTIQDI) are a coiled coil. A phosphoserine mark is found at serine 427, serine 500, serine 691, and serine 695. The Rho-GAP domain occupies 489–679 (ARRSSTVRKQ…TIIIQHENIF (191 aa)). Residues 698–726 (DYCDSPHGETTSVEDSTQDVTAEHHTSDD) form a disordered region. Positions 705–717 (GETTSVEDSTQDV) are enriched in polar residues. Serine 724 carries the phosphoserine modification. Positions 728–787 (CEPIEAIAKFDYVGRTARELSFKKGASLLLYQRASDDWWEGRHNGIDGLIPHQYIVVQDT) constitute an SH3 domain. Position 795 is a phosphoserine (serine 795). A disordered region spans residues 837–936 (QRKRPESGSI…RSKSFNNHRP (100 aa)). The segment covering 855–866 (HGLSSSLTDSSS) has biased composition (low complexity). 2 stretches are compositionally biased toward polar residues: residues 874-885 (RPSSQPIMSQSL) and 897-907 (GHGSLNSISRH). Phosphoserine is present on serine 916. Residues 919–933 (IRKTATAGRSKSFNN) are compositionally biased toward polar residues. Arginine 927 is subject to Symmetric dimethylarginine; by PRMT5. The residue at position 930 (serine 930) is a Phosphoserine. Residues 940-967 (EVIAQDIEATMNSALNELRELERQSSVK) are a coiled coil. Positions 983–1012 (SPVVAPTSEPSSPLHTQLLKDPEPAFQRSA) are disordered. A phosphoserine mark is found at serine 990, serine 994, serine 1013, and serine 1027. Positions 1029-1071 (KMAAPVKPPATRPKPTVFPKTNATSPGVNSSTSPQSTDKSCTV) are disordered. The segment covering 1047 to 1071 (PKTNATSPGVNSSTSPQSTDKSCTV) has biased composition (polar residues).

As to quaternary structure, homodimer. Heterodimer; forms a heterodimer with SRGAP2C, altering SRGAP2 function. Forms a heterooligomer with SRGAP1 and SRGAP3 through its F-BAR domain. Interacts (via SH3 domain) with GPHN. Interacts (via SH3 domain) with FMNL1 (activated by RAC1); regulates the actin filament severing activity of FMNL1 and actin dynamics. Interacts (via SH3 domain) with FMNL3. Interacts with RAC1; specifically stimulates RAC1 GTPase activity. Interacts (via F-BAR domain) with HOMER1. Interacts with ROBO1 and ROBO2. Interacts with FASLG. Interacts with PRMT5. In terms of processing, methylation at Arg-927 is required for the stimulation of cell migration, dimerization and localization at the plasma membrane protrusions.

The protein localises to the cell membrane. It localises to the cell projection. The protein resides in the dendritic spine. It is found in the postsynaptic density. Its subcellular location is the postsynaptic cell membrane. The protein localises to the lamellipodium. It localises to the cytoplasmic vesicle. The protein resides in the phagosome. It is found in the nucleus. Its subcellular location is the cytoplasm. The protein localises to the cytosol. Activity is strongly inhibited by SRGAP2C, which heterodimerize with SRGAP2/SRGAP2A, thereby reducing SRGAP2/SRGAP2A levels through proteasome-dependent degradation. In terms of biological role, postsynaptic RAC1 GTPase activating protein (GAP) that plays a key role in neuronal morphogenesis and migration mainly during development of the cerebral cortex. Regulates excitatory and inhibitory synapse maturation and density in cortical pyramidal neurons. SRGAP2/SRGAP2A limits excitatory and inhibitory synapse density through its RAC1-specific GTPase activating activity, while it promotes maturation of both excitatory and inhibitory synapses through its ability to bind to the postsynaptic scaffolding protein HOMER1 at excitatory synapses, and the postsynaptic protein GPHN at inhibitory synapses. Mechanistically, acts by binding and deforming membranes, thereby regulating actin dynamics to regulate cell migration and differentiation. Promotes cell repulsion and contact inhibition of locomotion: localizes to protrusions with curved edges and controls the duration of RAC1 activity in contact protrusions. In non-neuronal cells, may also play a role in cell migration by regulating the formation of lamellipodia and filopodia. This chain is SLIT-ROBO Rho GTPase-activating protein 2, found in Homo sapiens (Human).